An 88-amino-acid chain; its full sequence is Large ribosomal subunit protein bL27 (88 aa).

Positions 1–22 (MAQKKAGGSSRNGRDSAGRRLG) are disordered.

It belongs to the bacterial ribosomal protein bL27 family.

This is Large ribosomal subunit protein bL27 from Gluconobacter oxydans (strain 621H) (Gluconobacter suboxydans).